Here is a 245-residue protein sequence, read N- to C-terminus: P2Y purinoceptor 13 (245 aa).

The Extracellular segment spans residues 1-9 (QLRAFVCRL). A disulfide bond links Cys7 and Cys85. Residues 10-30 (SSVIFYETMYVGIVLLGLIAF) traverse the membrane as a helical segment. Over 31–35 (DRFLK) the chain is Cytoplasmic. The chain crosses the membrane as a helical span at residues 36 to 56 (IIRPLRNIFLKKTVFAKTVSV). Over 57 to 85 (FIWSFFFFISLPNMILSNKEATPSSVKKC) the chain is Extracellular. Residues 86 to 106 (ASLKGPLGLKWHQIVNNISQF) traverse the membrane as a helical segment. At 107-126 (IFWTVFVLMLVFYVVIAKKV) the chain is on the cytoplasmic side. Residues 127-147 (YDSYRKSKSKDRKNNKKLEGK) traverse the membrane as a helical segment. The Extracellular portion of the chain corresponds to 148-174 (VFVVVAVFFVCFAPFHFTRVPYTYSQT). Residues 175-195 (NNKTDCRLQNQLFIAKETTLF) traverse the membrane as a helical segment. At 196-245 (LAATNICMDPLIYIFLCKKFTEKLPCMRGRKTIASSQENQSSQTDNITLG) the chain is on the cytoplasmic side.

The protein belongs to the G-protein coupled receptor 1 family.

It is found in the cell membrane. Functionally, receptor for ADP. Coupled to G(i)-proteins. May play a role in hematopoiesis and the immune system. This Macaca fascicularis (Crab-eating macaque) protein is P2Y purinoceptor 13 (P2RY13).